Reading from the N-terminus, the 391-residue chain is RNA-binding motif protein, X chromosome (391 aa).

M1 is subject to N-acetylmethionine; in Heterogeneous nuclear ribonucleoprotein G; alternate. An N-acetylvaline; in Heterogeneous nuclear ribonucleoprotein G, N-terminally processed modification is found at V2. The region spanning 8–86 (GKLFIGGLNT…KAIKVEQATK (79 aa)) is the RRM domain. K22 is covalently cross-linked (Glycyl lysine isopeptide (Lys-Gly) (interchain with G-Cter in SUMO2)). K30 carries the N6-acetyllysine modification. The span at 61 to 80 (DAKDAARDMNGKSLDGKAIK) shows a compositional bias: basic and acidic residues. The segment at 61 to 391 (DAKDAARDMN…SDRGGGRSRY (331 aa)) is disordered. Glycyl lysine isopeptide (Lys-Gly) (interchain with G-Cter in SUMO2) cross-links involve residues K80 and K86. Phosphoserine occurs at positions 88 and 91. A compositionally biased stretch (gly residues) spans 109 to 120 (LRGGRGGSGGTR). Omega-N-methylarginine occurs at positions 125, 144, and 164. The segment covering 151-164 (RGPPPRSGGPPPKR) has biased composition (pro residues). Residue S165 is modified to Phosphoserine. R172 bears the Omega-N-methylarginine mark. At S174 the chain carries Phosphoserine. The interval 186 to 236 (GRDSYGGPPRREPLPSRRDVYLSPRDDGYSTKDSYSSRDYPSSRDTRDYAP) is necessary for the association to nascent RNAPII transcripts and nuclear localization. Composition is skewed to basic and acidic residues over residues 194 to 215 (PRREPLPSRRDVYLSPRDDGYS) and 241 to 274 (YTYRDYGHSSSRDDYPSRGYSDRDGYGRDRDYSD). Phosphoserine is present on residues S261, S328, S329, S330, and S332. Residues 323-337 (SRDSYSSSRSDLYSS) are compositionally biased toward low complexity. Residues 333-391 (DLYSSGRDRVGRQDRGLPPSMERGYPPPRDSYSSSSRGAPRGGGRGGSRSDRGGGRSRY) are necessary for RNA-binding. Basic and acidic residues predominate over residues 338–347 (GRDRVGRQDR). S352 is modified (phosphoserine). A compositionally biased stretch (low complexity) spans 362-371 (DSYSSSSRGA). The segment covering 380–391 (SRSDRGGGRSRY) has biased composition (basic and acidic residues).

In terms of assembly, homomultimer. Found in the supraspliceosome complex. Identified in the spliceosome C complex. Forms a complex with ILF2, ILF3, YLPM1, KHDRBS1, NCOA5 and PPP1CA. Interacts with CLK2, KHDRBS2, KHDRBS3, SAFB/SAFB1, TRA2B and YTHDC1. Interacts with ERAP1; the interaction is RNA-independent. Interacts with PPIA/CYPA. Post-translationally, O-glycosylated. In terms of processing, arg-185 is dimethylated, probably to asymmetric dimethylarginine.

Its subcellular location is the nucleus. Functionally, RNA-binding protein that plays several role in the regulation of pre- and post-transcriptional processes. Implicated in tissue-specific regulation of gene transcription and alternative splicing of several pre-mRNAs. Binds to and stimulates transcription from the tumor suppressor TXNIP gene promoter; may thus be involved in tumor suppression. When associated with SAFB, binds to and stimulates transcription from the SREBF1 promoter. Associates with nascent mRNAs transcribed by RNA polymerase II. Component of the supraspliceosome complex that regulates pre-mRNA alternative splice site selection. Can either activate or suppress exon inclusion; acts additively with TRA2B to promote exon 7 inclusion of the survival motor neuron SMN. Represses the splicing of MAPT/Tau exon 10. Binds preferentially to single-stranded 5'-CC[A/C]-rich RNA sequence motifs localized in a single-stranded conformation; probably binds RNA as a homodimer. Binds non-specifically to pre-mRNAs. Also plays a role in the cytoplasmic TNFR1 trafficking pathways; promotes both the IL-1-beta-mediated inducible proteolytic cleavage of TNFR1 ectodomains and the release of TNFR1 exosome-like vesicles to the extracellular compartment. This is RNA-binding motif protein, X chromosome (RBMX) from Macaca fascicularis (Crab-eating macaque).